The following is a 471-amino-acid chain: 3-isopropylmalate dehydratase large subunit (471 aa).

[4Fe-4S] cluster-binding residues include C346, C406, and C409.

It belongs to the aconitase/IPM isomerase family. LeuC type 1 subfamily. As to quaternary structure, heterodimer of LeuC and LeuD. It depends on [4Fe-4S] cluster as a cofactor.

The enzyme catalyses (2R,3S)-3-isopropylmalate = (2S)-2-isopropylmalate. Its pathway is amino-acid biosynthesis; L-leucine biosynthesis; L-leucine from 3-methyl-2-oxobutanoate: step 2/4. In terms of biological role, catalyzes the isomerization between 2-isopropylmalate and 3-isopropylmalate, via the formation of 2-isopropylmaleate. The polypeptide is 3-isopropylmalate dehydratase large subunit (Bacillus pumilus (strain SAFR-032)).